A 447-amino-acid chain; its full sequence is MSTMTPAEIVSELDKHIIGQAKAKKAVAVALRNRWRRQQVAEPLRQEITPKNILMIGPTGVGKTEIARRLAKLADAPFIKIEATKFTEVGYVGRDVDSIVRDLIEISVKQTRETEMRKVRSKATDLAEDRILDVLLPQPRAVGFGASAEHANDDNNATRQTFRKRLREGQLDDKEIELDIEQPAVGMDIMAPPGMEEMTEQIRSMFSNLGSGKKQRRKVKIREALKLLTDEEAAKMLNDEEVKTKAVQNVEQNGIVFLDEIDKITSRNHEGGGGEVSRQGVQRDLLPLVEGTTINTKYGMVKTDHILFIASGAFHLAKPSDLIPELQGRFPIRVELDSLSVKDFEAILVATDASLVKQYQALLATEDVKLEFADDGIRRLAEIAYAVNEKTENIGARRLYTVIEKLLEEVSFAAGNHAGQSVTIDSAYVDRALGEVSKDEDLSRYVL.

Residues isoleucine 18, 60-65, aspartate 259, glutamate 325, and arginine 397 each bind ATP; that span reads GVGKTE.

Belongs to the ClpX chaperone family. HslU subfamily. As to quaternary structure, a double ring-shaped homohexamer of HslV is capped on each side by a ring-shaped HslU homohexamer. The assembly of the HslU/HslV complex is dependent on binding of ATP.

It localises to the cytoplasm. In terms of biological role, ATPase subunit of a proteasome-like degradation complex; this subunit has chaperone activity. The binding of ATP and its subsequent hydrolysis by HslU are essential for unfolding of protein substrates subsequently hydrolyzed by HslV. HslU recognizes the N-terminal part of its protein substrates and unfolds these before they are guided to HslV for hydrolysis. The chain is ATP-dependent protease ATPase subunit HslU from Burkholderia pseudomallei (strain 668).